We begin with the raw amino-acid sequence, 60 residues long: Large ribosomal subunit protein bL32 (60 aa).

The protein belongs to the bacterial ribosomal protein bL32 family.

This is Large ribosomal subunit protein bL32 from Clostridium perfringens (strain ATCC 13124 / DSM 756 / JCM 1290 / NCIMB 6125 / NCTC 8237 / Type A).